We begin with the raw amino-acid sequence, 176 residues long: Protein SPMIP1 (176 aa).

Positions 55–80 (TLHPKAPLSPPPAPKSAPSKVPSPVP) are disordered. The segment covering 61-80 (PLSPPPAPKSAPSKVPSPVP) has biased composition (pro residues).

The polypeptide is Protein SPMIP1 (Homo sapiens (Human)).